The sequence spans 349 residues: uncharacterized protein (349 aa).

Over residues 116 to 135 (HFSQTNPKSTPEPPCTSSSG) the composition is skewed to polar residues. Residues 116–148 (HFSQTNPKSTPEPPCTSSSGAGDCHENLPADGY) are disordered.

This is an uncharacterized protein from Caenorhabditis elegans.